A 185-amino-acid chain; its full sequence is UPF0397 protein LGAS_1499 (185 aa).

The next 5 helical transmembrane spans lie at Gly-6 to Ala-26, Phe-46 to Gly-66, Thr-78 to Met-98, Val-118 to Ile-138, and Phe-147 to Ile-167.

This sequence belongs to the UPF0397 family.

The protein localises to the cell membrane. The protein is UPF0397 protein LGAS_1499 of Lactobacillus gasseri (strain ATCC 33323 / DSM 20243 / BCRC 14619 / CIP 102991 / JCM 1131 / KCTC 3163 / NCIMB 11718 / NCTC 13722 / AM63).